We begin with the raw amino-acid sequence, 428 residues long: MDIEIVTIGDELLLGFTIDTNAAHLAREFAALGVRIVRRATCGDDAESIAAAVREALDRTGAVITTGGLGPTADDMTKPAIASIFGRGMVMDAEVLANLEQRWLTRFGHTLPVSNRQQAMVPEGCTILANRHGSAPGIWLEDDHGRWVVMLPGVPREMRGMLADTILPLLRDRVPKDGPVIRSRTLRTANIAESALADRLGELARGVNGMPLAFLPGNDGVDLRLTSWSLPSRDAEGALTQAAALLREKVGRFIYGEGDDDLAALMLSECAMRDLTLAVAESCTGGMLGERLTAIPGSSRTVQGGVIAYANEVKTRELGVPAEMIAAHGAVSEPVARAMAEGVRQRFGTGIGIGITGIAGPDGGTPEKPVGTVWVAVDVEGDVRAVRALLPGNRFEIRYRAAQLALDRLRRAFAREAGDDAVGWTSRG.

It belongs to the CinA family.

In Gemmatimonas aurantiaca (strain DSM 14586 / JCM 11422 / NBRC 100505 / T-27), this protein is CinA-like protein.